We begin with the raw amino-acid sequence, 113 residues long: UPF0122 protein LCA_0713 (113 aa).

This sequence belongs to the UPF0122 family.

Its function is as follows. Might take part in the signal recognition particle (SRP) pathway. This is inferred from the conservation of its genetic proximity to ftsY/ffh. May be a regulatory protein. This Latilactobacillus sakei subsp. sakei (strain 23K) (Lactobacillus sakei subsp. sakei) protein is UPF0122 protein LCA_0713.